We begin with the raw amino-acid sequence, 448 residues long: Ribosomal protein uS12 methylthiotransferase RimO (448 aa).

Residues 7-123 (EKVSLVSLGC…IAEIIAEKEG (117 aa)) form the MTTase N-terminal domain. Positions 16, 52, 86, 161, 165, and 168 each coordinate [4Fe-4S] cluster. Residues 147-377 (SSPYYTAYLK…MRTQARVSFK (231 aa)) form the Radical SAM core domain. One can recognise a TRAM domain in the interval 380 to 448 (RSLVDTEELV…DYDLIGEIVP (69 aa)).

The protein belongs to the methylthiotransferase family. RimO subfamily. Requires [4Fe-4S] cluster as cofactor.

It localises to the cytoplasm. The catalysed reaction is L-aspartate(89)-[ribosomal protein uS12]-hydrogen + (sulfur carrier)-SH + AH2 + 2 S-adenosyl-L-methionine = 3-methylsulfanyl-L-aspartate(89)-[ribosomal protein uS12]-hydrogen + (sulfur carrier)-H + 5'-deoxyadenosine + L-methionine + A + S-adenosyl-L-homocysteine + 2 H(+). Its function is as follows. Catalyzes the methylthiolation of an aspartic acid residue of ribosomal protein uS12. This is Ribosomal protein uS12 methylthiotransferase RimO from Geotalea uraniireducens (strain Rf4) (Geobacter uraniireducens).